A 304-amino-acid chain; its full sequence is Putative F-box/LRR-repeat protein 21 (304 aa).

The region spanning 43-90 is the F-box domain; it reads RRNWVDLPPELTTSILLRLSLTDILDNAQKVCKEWRRICKDPSMWRKI. LRR repeat units lie at residues 132–159, 173–198, 218–241, and 243–268; these read LSYITDRNLRSLGLGMCFPRVTKLGVVN, THSCIKLDLKAIGHACPQLKTLKLNS, GPLECDDDALAIAESMPKLHHLQL, and ANRLTNTGLNAILDGCPHLEHLDVRK.

This chain is Putative F-box/LRR-repeat protein 21 (FBL21), found in Arabidopsis thaliana (Mouse-ear cress).